A 328-amino-acid polypeptide reads, in one-letter code: Malate dehydrogenase (328 aa).

NAD(+) is bound at residue Gly-11–Gly-17. Arg-94 and Arg-100 together coordinate substrate. NAD(+)-binding positions include Asn-107, Gln-114, and Val-131–Asn-133. Positions 133 and 164 each coordinate substrate. His-189 functions as the Proton acceptor in the catalytic mechanism.

The protein belongs to the LDH/MDH superfamily. MDH type 2 family.

It carries out the reaction (S)-malate + NAD(+) = oxaloacetate + NADH + H(+). Functionally, catalyzes the reversible oxidation of malate to oxaloacetate. This is Malate dehydrogenase from Xanthomonas campestris pv. campestris (strain B100).